A 208-amino-acid chain; its full sequence is ATP-dependent Clp protease proteolytic subunit (208 aa).

Ser-101 serves as the catalytic Nucleophile. Residue His-126 is part of the active site.

The protein belongs to the peptidase S14 family. Component of the chloroplastic Clp protease core complex.

It localises to the plastid. Its subcellular location is the chloroplast stroma. The enzyme catalyses Hydrolysis of proteins to small peptides in the presence of ATP and magnesium. alpha-casein is the usual test substrate. In the absence of ATP, only oligopeptides shorter than five residues are hydrolyzed (such as succinyl-Leu-Tyr-|-NHMec, and Leu-Tyr-Leu-|-Tyr-Trp, in which cleavage of the -Tyr-|-Leu- and -Tyr-|-Trp bonds also occurs).. Functionally, cleaves peptides in various proteins in a process that requires ATP hydrolysis. Has a chymotrypsin-like activity. Plays a major role in the degradation of misfolded proteins. This Nephroselmis olivacea (Green alga) protein is ATP-dependent Clp protease proteolytic subunit.